The chain runs to 796 residues: Cation/H(+) antiporter 6B (796 aa).

The next 13 helical transmembrane spans lie at 54 to 74 (DFWE…FLLW), 93 to 113 (SMML…IPCL), 131 to 151 (IGAF…DVGI), 159 to 179 (SVVI…LLYS), 194 to 213 (YTVM…NMLL), 223 to 243 (FGQI…FLTV), 259 to 279 (LAFM…LWVI), 285 to 305 (GAPV…LSYL), 310 to 330 (FLFF…NGPP), 344 to 364 (EGIF…WSFL), 382 to 402 (FSFL…AALA), 411 to 431 (IILG…VLTA), and 444 to 464 (LLGV…HFLY).

This sequence belongs to the monovalent cation:proton antiporter 2 (CPA2) transporter (TC 2.A.37) family. CHX (TC 2.A.37.4) subfamily. Preferentially expressed in pollen.

It is found in the membrane. Functionally, may operate as a cation/H(+) antiporter. In Arabidopsis thaliana (Mouse-ear cress), this protein is Cation/H(+) antiporter 6B (CHX6b).